The primary structure comprises 780 residues: Catenin beta-1 (780 aa).

Positions 34–56 (GIHSGATTTAPSLSGKGNPEDDD) are disordered. ARM repeat units follow at residues 140 to 179 (NYQDDAELATRAIPELTKLLNDEDQVVVNKAAVMVHQLSK), 224 to 263 (REGLLAIFKSGGIPALVKMLGSPVDSVLFYAITTLHNLLL), 266 to 305 (EGAKMAVRLAGGLQKMVALLNKTNVKFLAITTDCLQILAY), 350 to 389 (SSNKPAIVEAGGMQALGLHLTDPSQRLVQNCLWTLRNLSD), 399 to 430 (GLLGTLVQLLGSDDINVVTCAAGILSNLTCNN), 431 to 472 (YKNK…HLTS), 478 to 518 (EMAQ…NLAL), 520 to 561 (PANH…QFVE), 583 to 622 (IHNRIVIRGLNTIPLFVQLLYSPIENIQRVAAGVLCELAQ), and 624 to 663 (KEAAEAIEAEGATAPLTELLHSRNEGVATYAAAVLFRMSE). Positions 735–744 (EHEMAGHHPG) are enriched in basic and acidic residues. The segment at 735-770 (EHEMAGHHPGPDYPVDGLPDLGHTQDLIDGLPPGDS) is disordered.

It belongs to the beta-catenin family. Interacts with adnpa. Interacts with cdh1 during oogenesis and in the unfertilized egg. Interacts with ctnna1 and cdh2. Post-translationally, phosphorylation by gsk3b promotes ubiquitination and subsequent degradation by the proteasome. In terms of processing, ubiquitinated when phosphorylated by gsk3b, leading to its degradation. Expressed in the successional lamina, also expressed in both the epithelial and mesenchymal cells of the developing replacement tooth (at protein level). Expressed in the enamel organ as well as in the inner and outer dental epithelium during replacement tooth morphogenesis (at protein level). Expressed in the differentiated, polarized odontoblasts that line the dentine matrix as well as in the inner and outer dental epithelium during tooth cytodifferentiation (at protein level). Expressed in the reduced enamel organ, odontoblasts and weakly at the center of the dental papilla of the functional tooth as well as in the epithelial crypts surrounding the functional tooth (at protein level). Expressed in the liver (at protein level). Expressed at intercalated disks in the heart (at protein level). Expressed in the ovary.

It is found in the cytoplasm. The protein resides in the nucleus. The protein localises to the cell membrane. It localises to the cell junction. Its subcellular location is the adherens junction. Key downstream component of the canonical Wnt signaling pathway. In the absence of Wnt, forms a complex with axin1, axin2, apc, csnk1a1 and gsk3b that promotes phosphorylation on N-terminal Ser and Thr residues and ubiquitination of ctnnb1 and its subsequent degradation by the proteasome. In the presence of Wnt ligand, ctnnb1 is not ubiquitinated and accumulates in the nucleus, where it acts as a coactivator for transcription factors of the TCF/LEF family, leading to activate Wnt responsive genes. Plays a key role in dorsoventral patterning: in prospective ventral blastomeres, its down-regulation by axin1 and axin2 leads to inhibit the Wnt signaling pathway, while in prospective dorsal blastomeres, degradation of axin results in stabilization and nuclear translocation of ctnnb1. The protein is Catenin beta-1 of Danio rerio (Zebrafish).